The following is an 86-amino-acid chain: Translation initiation factor IF-1 3 (86 aa).

One can recognise an S1-like domain in the interval 1 to 72; the sequence is MAKEELIEMQ…NKGRVTFRHI (72 aa).

It belongs to the IF-1 family. Component of the 30S ribosomal translation pre-initiation complex which assembles on the 30S ribosome in the order IF-2 and IF-3, IF-1 and N-formylmethionyl-tRNA(fMet); mRNA recruitment can occur at any time during PIC assembly.

It localises to the cytoplasm. Functionally, one of the essential components for the initiation of protein synthesis. Stabilizes the binding of IF-2 and IF-3 on the 30S subunit to which N-formylmethionyl-tRNA(fMet) subsequently binds. Helps modulate mRNA selection, yielding the 30S pre-initiation complex (PIC). Upon addition of the 50S ribosomal subunit IF-1, IF-2 and IF-3 are released leaving the mature 70S translation initiation complex. The protein is Translation initiation factor IF-1 3 of Acidovorax sp. (strain JS42).